The chain runs to 902 residues: Adhesion G-protein coupled receptor D1 (902 aa).

A signal peptide spans 1-25; that stretch reads MKKLLPLCCWHSWLLLFYCDFQVRG. At 26 to 598 the chain is on the extracellular side; it reads AHTRSHVHPG…GHQVALSSIS (573 aa). Asn-68, Asn-76, Asn-83, Asn-89, Asn-121, Asn-183, Asn-217, Asn-310, Asn-330, Asn-337, Asn-347, Asn-422, Asn-504, Asn-529, and Asn-561 each carry an N-linked (GlcNAc...) asparagine glycan. The Pentraxin (PTX) domain maps to 111–304; that stretch reads KGVTFLYYRK…VNTMAPTNAY (194 aa). One can recognise a GAIN-B domain in the interval 399 to 585; that stretch reads QVAIVGSSSM…AILMQVVPLE (187 aa). Disulfide bonds link Cys-538–Cys-567 and Cys-555–Cys-569. The GPS stretch occupies residues 538 to 585; that stretch reads CAFLDFSSGEGIWSNQGCALTEGNLSYSICRCTHLTNFAILMQVVPLE. Positions 574–582 are stachel; the sequence is NFAILMQVV. Gln-591 contributes to the 17beta-hydroxy-5alpha-androstan-3-one binding site. Residues 599-619 form a helical membrane-spanning segment; sequence YIGCSLSVLCLAITLVTFAVL. Residues 620–630 are Cytoplasmic-facing; the sequence is SSVSTIRNQRY. A helical transmembrane segment spans residues 631-651; it reads HIHANLSCAVLVAQVLLLISF. Topologically, residues 652–661 are extracellular; it reads RFEPGTAPCQ. A disulfide bond links Cys-660 and Cys-732. Residues 662–682 form a helical membrane-spanning segment; it reads VLAMLLHYFFLSAFAWMLVEG. Residues 683–702 lie on the Cytoplasmic side of the membrane; the sequence is LHLYSMVIKVFGSEDSKHRY. The helical transmembrane segment at 703–723 threads the bilayer; the sequence is YYGIGWGFPLLICIISIVFAM. Over 724–739 the chain is Extracellular; sequence DSYGTSKNCWLSLGNG. A helical membrane pass occupies residues 740–760; sequence AIWAFVAPALFIIVVNIGILI. Over 761–788 the chain is Cytoplasmic; that stretch reads AVTRVISQISAENYKIHGDPSAFKLTAK. Residues 789–809 form a helical membrane-spanning segment; the sequence is AVAVLLPILGTSWVFGVLAVN. Over 810 to 812 the chain is Extracellular; that stretch reads NQA. A helical transmembrane segment spans residues 813–833; it reads MVFQYMFAILNSLQGFFIFLF. Over 834–902 the chain is Cytoplasmic; it reads HCLLNSEVRA…SGHRVDLSAV (69 aa). A disordered region spans residues 865 to 902; sequence KPFSSDIMNGTRPATGSTRLSPWDKSSHSGHRVDLSAV. Residues 870–884 show a composition bias toward polar residues; that stretch reads DIMNGTRPATGSTRL. The segment covering 889 to 902 has biased composition (basic and acidic residues); the sequence is KSSHSGHRVDLSAV.

Belongs to the G-protein coupled receptor 2 family. Adhesion G-protein coupled receptor (ADGR) subfamily. In terms of assembly, heterodimer of 2 chains generated by proteolytic processing; the large extracellular N-terminal fragment and the membrane-bound C-terminal fragment predominantly remain associated and non-covalently linked. Interacts with ESYT1; interaction takes place in absence of cytosolic calcium and inhibits the G protein-coupled receptor activity of ADGRD1. Post-translationally, autoproteolytically processed at the GPS region of the GAIN-B domain; this cleavage modulates receptor activity. Cleavage takes place early in the secretory pathway before N-glycosylation.

It localises to the cell membrane. Forms a heterodimer of 2 chains generated by proteolytic processing that remain associated through non-covalent interactions mediated by the GAIN-B domain. In the inactivated receptor, the Stachel sequence (also named stalk) is embedded in the GAIN-B domain, where it adopts a beta-strand conformation. On activation, the Stachel moves into the 7 transmembrane region and adopts a twisted hook-shaped configuration that forms contacts within the receptor, leading to coupling of a G-alpha protein, which activates signaling. The cleaved GAIN-B and N-terminal domains can then dissociate from the rest of the receptor. Interaction with ESYT1 in absence of cytosolic calcium inhibits the G protein-coupled receptor activity; interaction and inhibition is relieved when cytosolic calcium increases. Its function is as follows. Adhesion G-protein coupled receptor (aGPCR) for androgen hormone 5alpha-dihydrotestosterone (5alpha-DHT), also named 17beta-hydroxy-5alpha-androstan-3-one, the most potent hormone among androgens. Also activated by methenolone drug. Ligand binding causes a conformation change that triggers signaling via guanine nucleotide-binding proteins (G proteins) and modulates the activity of downstream effectors, such as adenylate cyclase. ADGRD1 is coupled to G(s) G proteins and mediates activation of adenylate cyclase activity. Acts as a 5alpha-DHT receptor in muscle cells, thereby increasing intracellular cyclic AMP (cAMP) levels and enhancing muscle strength. This is Adhesion G-protein coupled receptor D1 (ADGRD1) from Bos taurus (Bovine).